A 29-amino-acid chain; its full sequence is Kappa-sparatoxin-Hv1e (29 aa).

Intrachain disulfides connect Cys3–Cys17, Cys10–Cys22, and Cys16–Cys26.

In terms of tissue distribution, expressed by the venom gland.

It localises to the secreted. Functionally, inhibitor of voltage-gated potassium channels of the Kv4/KCND family. Blocks calcium channels (Cav). This is Kappa-sparatoxin-Hv1e from Heteropoda venatoria (Brown huntsman spider).